We begin with the raw amino-acid sequence, 308 residues long: Mycothiol acetyltransferase (308 aa).

2 consecutive N-acetyltransferase domains span residues 8–155 (RDVD…PRLR) and 160–308 (VQVR…RRAR). Residue Glu-39 coordinates 1D-myo-inositol 2-(L-cysteinylamino)-2-deoxy-alpha-D-glucopyranoside. 84 to 86 (LVV) serves as a coordination point for acetyl-CoA. Positions 187, 226, and 240 each coordinate 1D-myo-inositol 2-(L-cysteinylamino)-2-deoxy-alpha-D-glucopyranoside. Acetyl-CoA-binding positions include 244 to 246 (LGI) and 251 to 257 (QGLGLGR). A 1D-myo-inositol 2-(L-cysteinylamino)-2-deoxy-alpha-D-glucopyranoside-binding site is contributed by Tyr-278.

The protein belongs to the acetyltransferase family. MshD subfamily. Monomer.

It catalyses the reaction 1D-myo-inositol 2-(L-cysteinylamino)-2-deoxy-alpha-D-glucopyranoside + acetyl-CoA = mycothiol + CoA + H(+). Catalyzes the transfer of acetyl from acetyl-CoA to desacetylmycothiol (Cys-GlcN-Ins) to form mycothiol. The chain is Mycothiol acetyltransferase from Geodermatophilus obscurus (strain ATCC 25078 / DSM 43160 / JCM 3152 / CCUG 61914 / KCC A-0152 / KCTC 9177 / NBRC 13315 / NRRL B-3577 / G-20).